The primary structure comprises 543 residues: Chaperonin GroEL (543 aa).

Residues 29-32, 86-90, G413, 478-480, and D494 each bind ATP; these read TLGP, DGTTT, and NAA.

It belongs to the chaperonin (HSP60) family. As to quaternary structure, forms a cylinder of 14 subunits composed of two heptameric rings stacked back-to-back. Interacts with the co-chaperonin GroES.

The protein localises to the cytoplasm. It carries out the reaction ATP + H2O + a folded polypeptide = ADP + phosphate + an unfolded polypeptide.. Functionally, together with its co-chaperonin GroES, plays an essential role in assisting protein folding. The GroEL-GroES system forms a nano-cage that allows encapsulation of the non-native substrate proteins and provides a physical environment optimized to promote and accelerate protein folding. The protein is Chaperonin GroEL of Lactobacillus johnsonii (strain CNCM I-12250 / La1 / NCC 533).